Here is a 250-residue protein sequence, read N- to C-terminus: MTEPVELSVELIACSSFTPPASVAWDTDAHGAEALVEFAGRACYETFDKPNPRTATNAAYLRHIMEVGHTALLEHASATMYIRGISRSATHELVRHRHFSFSQLSQRFVHEGEQEVIIPELINEDPQLRSLFLRAMDDNRFVYNELLNALEEKLEGEPNALLRKKQARQAARAVLPNATESRIVVTGNFRSWRHFLGMRASEHADVEIRAVAVACLEKLKQQAPTVFGDFQVETLADGTQMATSPYVTDF.

Positions 7–233 (LSVELIACSS…PTVFGDFQVE (227 aa)) constitute a ThyX domain. DUMP contacts are provided by residues 92–95 (ELVR), 103–107 (QLSQR), and Arg-172. FAD contacts are provided by residues 95–97 (RHR) and Gln-103. The ThyX motif signature appears at 95 to 105 (RHRHFSFSQLS). FAD-binding positions include 188–190 (NFR) and His-194. DUMP is bound at residue Arg-199. Arg-199 serves as the catalytic Involved in ionization of N3 of dUMP, leading to its activation.

This sequence belongs to the thymidylate synthase ThyX family. Homotetramer. FAD is required as a cofactor.

It catalyses the reaction dUMP + (6R)-5,10-methylene-5,6,7,8-tetrahydrofolate + NADPH + H(+) = dTMP + (6S)-5,6,7,8-tetrahydrofolate + NADP(+). It participates in pyrimidine metabolism; dTTP biosynthesis. Its function is as follows. Catalyzes the reductive methylation of 2'-deoxyuridine-5'-monophosphate (dUMP) to 2'-deoxythymidine-5'-monophosphate (dTMP) while utilizing 5,10-methylenetetrahydrofolate (mTHF) as the methyl donor, and NADPH and FADH(2) as the reductant. This Corynebacterium efficiens (strain DSM 44549 / YS-314 / AJ 12310 / JCM 11189 / NBRC 100395) protein is Flavin-dependent thymidylate synthase.